The sequence spans 313 residues: Ribosomal RNA small subunit methyltransferase H (313 aa).

Residues 35-37 (GGH), aspartate 55, phenylalanine 79, aspartate 100, and glutamine 107 contribute to the S-adenosyl-L-methionine site.

It belongs to the methyltransferase superfamily. RsmH family.

The protein resides in the cytoplasm. The catalysed reaction is cytidine(1402) in 16S rRNA + S-adenosyl-L-methionine = N(4)-methylcytidine(1402) in 16S rRNA + S-adenosyl-L-homocysteine + H(+). In terms of biological role, specifically methylates the N4 position of cytidine in position 1402 (C1402) of 16S rRNA. The sequence is that of Ribosomal RNA small subunit methyltransferase H from Burkholderia multivorans (strain ATCC 17616 / 249).